Here is a 210-residue protein sequence, read N- to C-terminus: Large ribosomal subunit protein uL4 (210 aa).

Over residues 44–54 (QRQGTASTLTR) the composition is skewed to polar residues. The interval 44–96 (QRQGTASTLTRSEVRGGGRKPYKQKGTGRARQGSIRTPLRPGGGVIFGPKPRS) is disordered. Over residues 60 to 71 (GGRKPYKQKGTG) the composition is skewed to basic residues.

It belongs to the universal ribosomal protein uL4 family. In terms of assembly, part of the 50S ribosomal subunit.

In terms of biological role, one of the primary rRNA binding proteins, this protein initially binds near the 5'-end of the 23S rRNA. It is important during the early stages of 50S assembly. It makes multiple contacts with different domains of the 23S rRNA in the assembled 50S subunit and ribosome. Its function is as follows. Forms part of the polypeptide exit tunnel. This is Large ribosomal subunit protein uL4 from Prochlorococcus marinus (strain MIT 9515).